The following is a 336-amino-acid chain: Antigen-presenting glycoprotein CD1d1 (336 aa).

The signal sequence occupies residues 1–21 (MRYLPWLLLWAFLQVWGQSEA). At 22–305 (QQKNYTFRCL…YWDARQAPVG (284 aa)) the chain is on the extracellular side. Asparagine 25, asparagine 38, and asparagine 60 each carry an N-linked (GlcNAc...) asparagine glycan. Residue aspartate 98 participates in a D-galactosylceramide binding. 2 cysteine pairs are disulfide-bonded: cysteine 122–cysteine 186 and cysteine 226–cysteine 281. Asparagine 128 carries an N-linked (GlcNAc...) asparagine glycan. An a D-galactosylceramide-binding site is contributed by 171 to 174 (DQGT). Asparagine 183 carries N-linked (GlcNAc...) asparagine glycosylation. The Ig-like domain maps to 207 to 297 (PVAWLSSVPS…LGGQDIILYW (91 aa)). The chain crosses the membrane as a helical span at residues 306-326 (LIVFIVLIMLVVVGAVVYYIW). The Cytoplasmic portion of the chain corresponds to 327–336 (RRRSAYQDIR). Positions 332 to 335 (YQDI) match the Internalization signal motif.

As to quaternary structure, heterodimer with B2M (beta-2-microglobulin). Interacts with MHC II and CD74. Post-translationally, N-glycosylated. As to expression, expressed on cortical thymocytes, on certain T-cell leukemias, and in various other tissues.

The protein resides in the cell membrane. The protein localises to the endosome membrane. Its subcellular location is the lysosome membrane. Antigen-presenting protein that binds self and non-self glycolipids and presents them to T-cell receptors on natural killer T-cells. In Mus musculus (Mouse), this protein is Antigen-presenting glycoprotein CD1d1 (Cd1d1).